The chain runs to 293 residues: AKT-interacting protein (293 aa).

Residues 1–11 (MNPFWSMSTSS) show a composition bias toward polar residues. Positions 1 to 63 (MNPFWSMSTS…TSPAPAAQST (63 aa)) are disordered. Positions 14 to 23 (KRSEGEEKTL) are enriched in basic and acidic residues. Phosphoserine is present on Ser30. Positions 74–222 (YLEYSLLAEF…VVDSVQVCTA (149 aa)) constitute a UBC core domain. Basic and acidic residues predominate over residues 253–265 (MLTQKKKPEEQHN). The interval 253 to 293 (MLTQKKKPEEQHNKSVHVAGLSWVKPGSVQPFSKEEKTVAT) is disordered.

This sequence belongs to the ubiquitin-conjugating enzyme family. FTS subfamily. In terms of assembly, component of the FTS/Hook/FHIP complex (FHF complex), composed of AKTIP/FTS, FHIP1B, and one or more members of the Hook family of proteins HOOK1, HOOK2, and HOOK3. Interacts directly with HOOK1, HOOK2 and HOOK3. The FHF complex associates with the homotypic vesicular sorting complex (the HOPS complex). Also interacts with AKT1. May interact with FHIP1A.

The protein resides in the cytoplasm. Its subcellular location is the cell membrane. In terms of biological role, component of the FTS/Hook/FHIP complex (FHF complex). The FHF complex may function to promote vesicle trafficking and/or fusion via the homotypic vesicular protein sorting complex (the HOPS complex). Regulates apoptosis by enhancing phosphorylation and activation of AKT1. Increases release of TNFSF6 via the AKT1/GSK3B/NFATC1 signaling cascade. FHF complex promotes the distribution of AP-4 complex to the perinuclear area of the cell. The chain is AKT-interacting protein (AKTIP) from Pongo abelii (Sumatran orangutan).